A 184-amino-acid polypeptide reads, in one-letter code: Mitochondrial import inner membrane translocase subunit Tim22 (184 aa).

2 cysteine pairs are disulfide-bonded: Cys-59–Cys-131 and Cys-150–Cys-169. 3 consecutive transmembrane segments (helical) span residues 64 to 84 (ALAC…TAGI), 115 to 133 (YAKN…ECLV), and 160 to 180 (AGLK…AVID).

Belongs to the Tim17/Tim22/Tim23 family. As to quaternary structure, core component of the TIM22 complex.

Its subcellular location is the mitochondrion inner membrane. Essential core component of the TIM22 complex, a complex that mediates the import and insertion of multi-pass transmembrane proteins into the mitochondrial inner membrane. In the TIM22 complex, it constitutes the voltage-activated and signal-gated channel. Forms a twin-pore translocase that uses the membrane potential as external driving force in 2 voltage-dependent steps. This Xenopus laevis (African clawed frog) protein is Mitochondrial import inner membrane translocase subunit Tim22 (timm22).